The primary structure comprises 88 residues: uncharacterized protein (88 aa).

The interval 1-54 is disordered; sequence AVDAYDDDDNLKNEEGDYYNESDDGYSGDEEEEEKQEEDEQDDDDLQFDDGVPE. The span at 16–53 shows a compositional bias: acidic residues; it reads GDYYNESDDGYSGDEEEEEKQEEDEQDDDDLQFDDGVP.

Predominantly in developing fruit.

This is an uncharacterized protein from Fragaria ananassa (Strawberry).